We begin with the raw amino-acid sequence, 268 residues long: MSAFSEAALERKLSELSNSQQSVQTLSLWLIHHRKHSALIVSVWERELRKAKPNRKLTFLYLANDVIQNSKRKGPEFTKDFAPVIVEAFKHVSSESDESCKKHPGRVLSIWEERSVYENDVLEQLRQALYGDRKVRKRTYEQIKVDENNCSPRSSPTDPPQTMDLIRALQELENAASGDAAVHQRIASLPIEVQDVSLLDRITDKESGEQLSKMVDDACMLLADYNGRLAAEIDDRKQLTRMLSDFLRCQKEFLAEKEHKLEVRIVLF.

A CID domain is found at 1–133 (MSAFSEAALE…QLRQALYGDR (133 aa)).

The protein belongs to the UPF0400 (RTT103) family. May form a heterodimer with RPRD1B. Associates with the RNA polymerase II subunit POLR2A (via CTD phosphorylated at 'Ser-2' and 'Ser-7' of the heptad repeats).

The protein resides in the nucleus. Interacts with phosphorylated C-terminal heptapeptide repeat domain (CTD) of the largest RNA polymerase II subunit POLR2A, and participates in dephosphorylation of the CTD by RPAP2. May act as a negative regulator of cyclin-D1 (CCND1) and cyclin-E (CCNE1) in the cell cycle. The protein is Regulation of nuclear pre-mRNA domain-containing protein 1A (RPRD1A) of Gallus gallus (Chicken).